The following is a 284-amino-acid chain: Shikimate dehydrogenase (NADP(+)) (284 aa).

Shikimate contacts are provided by residues 20 to 22 (SIS) and S67. K71 (proton acceptor) is an active-site residue. D83 contributes to the NADP(+) binding site. Shikimate contacts are provided by N92 and D107. NADP(+) contacts are provided by residues 129-133 (GAGGA) and I227. Y229 is a binding site for shikimate. G250 lines the NADP(+) pocket.

The protein belongs to the shikimate dehydrogenase family. In terms of assembly, homodimer.

It carries out the reaction shikimate + NADP(+) = 3-dehydroshikimate + NADPH + H(+). It participates in metabolic intermediate biosynthesis; chorismate biosynthesis; chorismate from D-erythrose 4-phosphate and phosphoenolpyruvate: step 4/7. Involved in the biosynthesis of the chorismate, which leads to the biosynthesis of aromatic amino acids. Catalyzes the reversible NADPH linked reduction of 3-dehydroshikimate (DHSA) to yield shikimate (SA). The polypeptide is Shikimate dehydrogenase (NADP(+)) (Streptococcus pneumoniae (strain JJA)).